The chain runs to 433 residues: Probable dipeptidase (433 aa).

The active site involves Cys-20.

Belongs to the peptidase C69 family.

It catalyses the reaction an L-aminoacyl-L-amino acid + H2O = 2 an L-alpha-amino acid. This Salmonella dublin protein is Probable dipeptidase (pipD).